The primary structure comprises 330 residues: Malate dehydrogenase (330 aa).

Position 15–21 (15–21 (GGTGQIA)) interacts with NAD(+). Substrate is bound by residues Arg-96 and Arg-102. NAD(+) contacts are provided by residues Asn-109, Gln-116, and 133-135 (VGN). Positions 135 and 166 each coordinate substrate. His-191 serves as the catalytic Proton acceptor.

The protein belongs to the LDH/MDH superfamily. MDH type 2 family.

The catalysed reaction is (S)-malate + NAD(+) = oxaloacetate + NADH + H(+). Functionally, catalyzes the reversible oxidation of malate to oxaloacetate. The polypeptide is Malate dehydrogenase (Chlamydia caviae (strain ATCC VR-813 / DSM 19441 / 03DC25 / GPIC) (Chlamydophila caviae)).